Reading from the N-terminus, the 261-residue chain is Indole-3-glycerol phosphate synthase (261 aa).

It belongs to the TrpC family.

It carries out the reaction 1-(2-carboxyphenylamino)-1-deoxy-D-ribulose 5-phosphate + H(+) = (1S,2R)-1-C-(indol-3-yl)glycerol 3-phosphate + CO2 + H2O. The protein operates within amino-acid biosynthesis; L-tryptophan biosynthesis; L-tryptophan from chorismate: step 4/5. The polypeptide is Indole-3-glycerol phosphate synthase (Burkholderia thailandensis (strain ATCC 700388 / DSM 13276 / CCUG 48851 / CIP 106301 / E264)).